The chain runs to 117 residues: Large ribosomal subunit protein bL20 (117 aa).

Belongs to the bacterial ribosomal protein bL20 family.

Functionally, binds directly to 23S ribosomal RNA and is necessary for the in vitro assembly process of the 50S ribosomal subunit. It is not involved in the protein synthesizing functions of that subunit. The polypeptide is Large ribosomal subunit protein bL20 (Rickettsia africae (strain ESF-5)).